Reading from the N-terminus, the 189-residue chain is Accessory gene regulator protein B (189 aa).

5 helical membrane-spanning segments follow: residues 49–69 (IAYILNIFLFTLITNLTFYLI), 81–100 (SFWCYVESIILFILLPLVIV), 110–130 (IILTVISLGVISVYAPAATKK), 143–163 (YYAIIVSLTLFIITLIIKEPF), and 164–184 (AQFIQLGIIIEAITLLPIFFI).

This sequence belongs to the AgrB family.

It is found in the cell membrane. Its function is as follows. Essential for the production of a quorum sensing system signal molecule, the autoinducing peptide (AIP). This quorum sensing system is responsible for the regulation of the expression of virulence factor genes. Involved in the proteolytic processing of AgrD, the precursor of AIP. The protein is Accessory gene regulator protein B of Staphylococcus aureus (strain COL).